The sequence spans 453 residues: RuvB-like helicase 1 (453 aa).

71–78 (GGPGTGKT) provides a ligand contact to ATP.

The protein belongs to the RuvB family. May form heterododecamers with RVB2. Component of the SWR1 chromatin remodeling complex, the INO80 chromatin remodeling complex, and of the R2TP complex.

It is found in the nucleus. It carries out the reaction ATP + H2O = ADP + phosphate + H(+). DNA helicase which participates in several chromatin remodeling complexes, including the SWR1 and the INO80 complexes. The SWR1 complex mediates the ATP-dependent exchange of histone H2A for the H2A variant HZT1 leading to transcriptional regulation of selected genes by chromatin remodeling. The INO80 complex remodels chromatin by shifting nucleosomes and is involved in DNA repair. Also involved in pre-rRNA processing. This is RuvB-like helicase 1 (RVB1) from Yarrowia lipolytica (strain CLIB 122 / E 150) (Yeast).